A 309-amino-acid polypeptide reads, in one-letter code: Glutaminase (309 aa).

7 residues coordinate substrate: S64, N114, E160, N167, Y191, Y243, and V261.

Belongs to the glutaminase family. In terms of assembly, homotetramer.

It carries out the reaction L-glutamine + H2O = L-glutamate + NH4(+). The sequence is that of Glutaminase from Rhizobium rhizogenes (strain K84 / ATCC BAA-868) (Agrobacterium radiobacter).